Reading from the N-terminus, the 281-residue chain is Polyamine aminopropyltransferase (281 aa).

The PABS domain occupies 2–236 (DLWLKEGQIS…GYWSFTIGSK (235 aa)). Position 31 (Q31) interacts with S-methyl-5'-thioadenosine. Spermidine contacts are provided by H62 and D86. Residues E106 and 138 to 139 (DG) each bind S-methyl-5'-thioadenosine. D156 acts as the Proton acceptor in catalysis. 156 to 159 (DSTD) serves as a coordination point for spermidine.

Belongs to the spermidine/spermine synthase family. In terms of assembly, homodimer or homotetramer.

It localises to the cytoplasm. The enzyme catalyses S-adenosyl 3-(methylsulfanyl)propylamine + putrescine = S-methyl-5'-thioadenosine + spermidine + H(+). It functions in the pathway amine and polyamine biosynthesis; spermidine biosynthesis; spermidine from putrescine: step 1/1. Functionally, catalyzes the irreversible transfer of a propylamine group from the amino donor S-adenosylmethioninamine (decarboxy-AdoMet) to putrescine (1,4-diaminobutane) to yield spermidine. This is Polyamine aminopropyltransferase from Clostridium tetani (strain Massachusetts / E88).